The chain runs to 724 residues: ATPase family protein 2 homolog (724 aa).

ATP-binding positions include 281 to 287 (PGSGKTL) and 503 to 508 (GCSKTL).

It belongs to the AAA ATPase family. AFG2 subfamily. In terms of assembly, homohexamer; ATP binding induces oligomerization. Forms a ring-shaped particle of about 12 nm diameter, that displays 6-fold radial symmetry. Interacts (via N-terminus) with kinase air-2; the interaction is direct and inhibits air-2 kinase activity in an ATPase-dependent manner.

It localises to the cytoplasm. The enzyme catalyses ATP + H2O = ADP + phosphate + H(+). In terms of biological role, ATP-dependent chaperone which uses the energy provided by ATP hydrolysis to generate mechanical force to disassemble protein complexes. Required for various steps of embryonic mitosis including centrosome duplication, spindle assembly, ER dynamics and cell cycle progression. Regulates the stability and activity of kinase air-2, a component of the chromosomal passenger complex (CPC). Inhibits air-2 kinase activity from metaphase to late telophase and negatively regulates air-2 stability during mitotic exit. Controls ER transition into sheet-like structures at the onset of mitosis, possibly by regulating homotypic membrane fusion. The protein is ATPase family protein 2 homolog of Caenorhabditis elegans.